A 354-amino-acid chain; its full sequence is Histidinol-phosphate aminotransferase (354 aa).

Position 210 is an N6-(pyridoxal phosphate)lysine (Lys-210).

Belongs to the class-II pyridoxal-phosphate-dependent aminotransferase family. Histidinol-phosphate aminotransferase subfamily. As to quaternary structure, homodimer. Pyridoxal 5'-phosphate serves as cofactor.

The enzyme catalyses L-histidinol phosphate + 2-oxoglutarate = 3-(imidazol-4-yl)-2-oxopropyl phosphate + L-glutamate. It functions in the pathway amino-acid biosynthesis; L-histidine biosynthesis; L-histidine from 5-phospho-alpha-D-ribose 1-diphosphate: step 7/9. In Clostridium botulinum (strain Okra / Type B1), this protein is Histidinol-phosphate aminotransferase.